A 185-amino-acid polypeptide reads, in one-letter code: Ribosome-recycling factor (185 aa).

Belongs to the RRF family.

The protein localises to the cytoplasm. Responsible for the release of ribosomes from messenger RNA at the termination of protein biosynthesis. May increase the efficiency of translation by recycling ribosomes from one round of translation to another. This is Ribosome-recycling factor from Rhodococcus erythropolis (strain PR4 / NBRC 100887).